The chain runs to 330 residues: Anthranilate phosphoribosyltransferase (330 aa).

5-phospho-alpha-D-ribose 1-diphosphate-binding positions include glycine 79, 82 to 83, threonine 87, 89 to 92, 107 to 115, and serine 119; these read GD, NIST, and KHGNYGVSS. An anthranilate-binding site is contributed by glycine 79. Serine 91 provides a ligand contact to Mg(2+). Anthranilate is bound at residue asparagine 110. Arginine 165 serves as a coordination point for anthranilate. Mg(2+)-binding residues include aspartate 223 and glutamate 224.

Belongs to the anthranilate phosphoribosyltransferase family. As to quaternary structure, homodimer. It depends on Mg(2+) as a cofactor.

The catalysed reaction is N-(5-phospho-beta-D-ribosyl)anthranilate + diphosphate = 5-phospho-alpha-D-ribose 1-diphosphate + anthranilate. The protein operates within amino-acid biosynthesis; L-tryptophan biosynthesis; L-tryptophan from chorismate: step 2/5. Its function is as follows. Catalyzes the transfer of the phosphoribosyl group of 5-phosphorylribose-1-pyrophosphate (PRPP) to anthranilate to yield N-(5'-phosphoribosyl)-anthranilate (PRA). This Flavobacterium psychrophilum (strain ATCC 49511 / DSM 21280 / CIP 103535 / JIP02/86) protein is Anthranilate phosphoribosyltransferase.